The sequence spans 513 residues: ATP synthase subunit alpha (513 aa).

ATP is bound at residue 170–177; that stretch reads GDRQTGKT.

This sequence belongs to the ATPase alpha/beta chains family. F-type ATPases have 2 components, CF(1) - the catalytic core - and CF(0) - the membrane proton channel. CF(1) has five subunits: alpha(3), beta(3), gamma(1), delta(1), epsilon(1). CF(0) has three main subunits: a(1), b(2) and c(9-12). The alpha and beta chains form an alternating ring which encloses part of the gamma chain. CF(1) is attached to CF(0) by a central stalk formed by the gamma and epsilon chains, while a peripheral stalk is formed by the delta and b chains.

The protein localises to the cell inner membrane. The enzyme catalyses ATP + H2O + 4 H(+)(in) = ADP + phosphate + 5 H(+)(out). In terms of biological role, produces ATP from ADP in the presence of a proton gradient across the membrane. The alpha chain is a regulatory subunit. This chain is ATP synthase subunit alpha, found in Teredinibacter turnerae (strain ATCC 39867 / T7901).